The primary structure comprises 199 residues: Recombination protein RecR (199 aa).

A C4-type zinc finger spans residues 57 to 72 (CSICGNITDEDPCAIC). A Toprim domain is found at 80–176 (STILVVEQPK…KVTRLAHGLS (97 aa)).

The protein belongs to the RecR family.

Functionally, may play a role in DNA repair. It seems to be involved in an RecBC-independent recombinational process of DNA repair. It may act with RecF and RecO. In Lacticaseibacillus casei (strain BL23) (Lactobacillus casei), this protein is Recombination protein RecR.